A 427-amino-acid chain; its full sequence is Glutamate-1-semialdehyde 2,1-aminomutase (427 aa).

Lys-265 carries the N6-(pyridoxal phosphate)lysine modification.

It belongs to the class-III pyridoxal-phosphate-dependent aminotransferase family. HemL subfamily. In terms of assembly, homodimer. It depends on pyridoxal 5'-phosphate as a cofactor.

It is found in the cytoplasm. The enzyme catalyses (S)-4-amino-5-oxopentanoate = 5-aminolevulinate. It functions in the pathway porphyrin-containing compound metabolism; protoporphyrin-IX biosynthesis; 5-aminolevulinate from L-glutamyl-tRNA(Glu): step 2/2. The chain is Glutamate-1-semialdehyde 2,1-aminomutase from Burkholderia pseudomallei (strain 668).